The sequence spans 341 residues: N-acetyl-gamma-glutamyl-phosphate reductase (341 aa).

The active site involves Cys-147.

Belongs to the NAGSA dehydrogenase family. Type 1 subfamily.

The protein resides in the cytoplasm. The enzyme catalyses N-acetyl-L-glutamate 5-semialdehyde + phosphate + NADP(+) = N-acetyl-L-glutamyl 5-phosphate + NADPH + H(+). Its pathway is amino-acid biosynthesis; L-arginine biosynthesis; N(2)-acetyl-L-ornithine from L-glutamate: step 3/4. In terms of biological role, catalyzes the NADPH-dependent reduction of N-acetyl-5-glutamyl phosphate to yield N-acetyl-L-glutamate 5-semialdehyde. The protein is N-acetyl-gamma-glutamyl-phosphate reductase of Dehalococcoides mccartyi (strain ATCC BAA-2266 / KCTC 15142 / 195) (Dehalococcoides ethenogenes (strain 195)).